Here is a 160-residue protein sequence, read N- to C-terminus: Non-secretory ribonuclease (160 aa).

The first 27 residues, 1–27 (MVPKLFTSPICLLLLLGLMGVEGSLHA), serve as a signal peptide directing secretion. Trp-34 carries C-linked (Man) tryptophan glycosylation. Residue His-42 is the Proton acceptor of the active site. The N-linked (GlcNAc...) asparagine glycan is linked to Asn-44. Intrachain disulfides connect Cys-50–Cys-110, Cys-64–Cys-122, Cys-82–Cys-137, and Cys-89–Cys-98. Tyr-60 is subject to 3'-nitrotyrosine. 65-69 (KNQNT) lines the substrate pocket. Residues Asn-92, Asn-111, Asn-118, and Asn-138 are each glycosylated (N-linked (GlcNAc...) asparagine). The active-site Proton donor is the His-155.

The protein belongs to the pancreatic ribonuclease family. As to quaternary structure, interacts with and forms a tight 1:1 complex with RNH1. Dimerization of two such complexes may occur.

The protein resides in the lysosome. The protein localises to the cytoplasmic granule. The enzyme catalyses an [RNA] containing cytidine + H2O = an [RNA]-3'-cytidine-3'-phosphate + a 5'-hydroxy-ribonucleotide-3'-[RNA].. It catalyses the reaction an [RNA] containing uridine + H2O = an [RNA]-3'-uridine-3'-phosphate + a 5'-hydroxy-ribonucleotide-3'-[RNA].. Functionally, this is a non-secretory ribonuclease. It is a pyrimidine specific nuclease with a slight preference for U. Cytotoxin and helminthotoxin. Possesses a wide variety of biological activities. This Chlorocebus aethiops (Green monkey) protein is Non-secretory ribonuclease (RNASE2).